The chain runs to 209 residues: MLLCDIGNSNANFLDDNKYFTLSIDQFLEFKNEQKIFYINVNEHLKEHLKNQKKFINLEPYFLFDTIYQGLGIDRIAACYTIEDGVVVDAGSAITIDIISNSIHLGGFILPGIANYKKIYSHISPRLKSEFNTQVSLDAFPQKTMDALSYGVFKGIYLLIKDAAQNKKLYFTGGDGQFLANYFDHAIYDKLLIFRGMKKIIKENPNLLY.

5 to 12 (DIGNSNAN) is a binding site for ATP. Substrate is bound by residues tyrosine 68 and 72–75 (GIDR). Residue aspartate 74 is the Proton acceptor of the active site. Aspartate 89 serves as a coordination point for K(+). Serine 92 is an ATP binding site. Substrate is bound at residue threonine 144.

This sequence belongs to the type III pantothenate kinase family. As to quaternary structure, homodimer. NH4(+) serves as cofactor. It depends on K(+) as a cofactor.

The protein resides in the cytoplasm. It carries out the reaction (R)-pantothenate + ATP = (R)-4'-phosphopantothenate + ADP + H(+). It participates in cofactor biosynthesis; coenzyme A biosynthesis; CoA from (R)-pantothenate: step 1/5. Its function is as follows. Catalyzes the phosphorylation of pantothenate (Pan), the first step in CoA biosynthesis. This chain is Type III pantothenate kinase, found in Campylobacter jejuni (strain RM1221).